The primary structure comprises 206 residues: Recombination protein RecR (206 aa).

The C4-type zinc-finger motif lies at 60-75; sequence CAMCNTFCEGGLCDIC. Residues 83 to 178 enclose the Toprim domain; the sequence is RRLMVVHMPA…KVSRLSQGIP (96 aa).

This sequence belongs to the RecR family.

In terms of biological role, may play a role in DNA repair. It seems to be involved in an RecBC-independent recombinational process of DNA repair. It may act with RecF and RecO. In Neisseria meningitidis serogroup B (strain ATCC BAA-335 / MC58), this protein is Recombination protein RecR.